Here is a 359-residue protein sequence, read N- to C-terminus: Nicotinate-nucleotide--dimethylbenzimidazole phosphoribosyltransferase (359 aa).

The active-site Proton acceptor is the Glu-318.

Belongs to the CobT family. Homodimer.

It carries out the reaction 5,6-dimethylbenzimidazole + nicotinate beta-D-ribonucleotide = alpha-ribazole 5'-phosphate + nicotinate + H(+). It participates in nucleoside biosynthesis; alpha-ribazole biosynthesis; alpha-ribazole from 5,6-dimethylbenzimidazole: step 1/2. Its function is as follows. Catalyzes the synthesis of alpha-ribazole-5'-phosphate from nicotinate mononucleotide (NAMN) and 5,6-dimethylbenzimidazole (DMB). In Escherichia coli (strain SMS-3-5 / SECEC), this protein is Nicotinate-nucleotide--dimethylbenzimidazole phosphoribosyltransferase.